Here is a 68-residue protein sequence, read N- to C-terminus: Large ribosomal subunit protein bL31 (68 aa).

4 residues coordinate Zn(2+): cysteine 16, cysteine 18, cysteine 36, and cysteine 39.

Belongs to the bacterial ribosomal protein bL31 family. Type A subfamily. In terms of assembly, part of the 50S ribosomal subunit. The cofactor is Zn(2+).

Functionally, binds the 23S rRNA. In Lachnospira eligens (strain ATCC 27750 / DSM 3376 / VPI C15-48 / C15-B4) (Eubacterium eligens), this protein is Large ribosomal subunit protein bL31.